The sequence spans 563 residues: Serine palmitoyltransferase 3 (563 aa).

The span at 1–29 (MANLNDSAVTNGTLHNPKTQQGKRQSTGC) shows a compositional bias: polar residues. A disordered region spans residues 1–32 (MANLNDSAVTNGTLHNPKTQQGKRQSTGCVKN). The chain crosses the membrane as a helical span at residues 59–79 (PLYVYVLTYMGYGIGILFGYL). N6-(pyridoxal phosphate)lysine is present on Lys371.

The protein belongs to the class-II pyridoxal-phosphate-dependent aminotransferase family. Component of the serine palmitoyltransferase (SPT) complex, which is composed of SPTLC1, SPTLC2 or SPTLC3 and SPTSSA or SPTSSB. The heterodimer consisting of SPTLC1 and SPTLC2/SPTLC3 forms the catalytic core of the enzyme, while SPTSSA or SPTSSB subunits determine substrate specificity. SPT also interacts with ORMDL proteins, especially ORMDL3, which negatively regulate SPT activity in the presence of ceramides. Requires pyridoxal 5'-phosphate as cofactor. As to expression, expressed in white and brown adipose tissues.

The protein localises to the endoplasmic reticulum membrane. The catalysed reaction is L-serine + hexadecanoyl-CoA + H(+) = 3-oxosphinganine + CO2 + CoA. It carries out the reaction dodecanoyl-CoA + L-serine + H(+) = 3-oxotetradecasphinganine + CO2 + CoA. The enzyme catalyses tetradecanoyl-CoA + L-serine + H(+) = 3-oxohexadecasphinganine + CO2 + CoA. It catalyses the reaction octadecanoyl-CoA + L-serine + H(+) = 3-oxoeicosasphinganine + CO2 + CoA. It functions in the pathway lipid metabolism; sphingolipid metabolism. SPT complex catalytic activity is negatively regulated by ORMDL proteins, including ORMDL3, in the presence of ceramides. This mechanism allows to maintain ceramide levels at sufficient concentrations for the production of complex sphingolipids, but which prevents the accumulation of ceramides to levels that trigger apoptosis. Component of the serine palmitoyltransferase multisubunit enzyme (SPT) that catalyzes the initial and rate-limiting step in sphingolipid biosynthesis by condensing L-serine and activated acyl-CoA (most commonly palmitoyl-CoA) to form long-chain bases. The SPT complex is composed of SPTLC1, SPTLC2 or SPTLC3 and SPTSSA or SPTSSB. Within this complex, the heterodimer consisting of SPTLC1 and SPTLC2/SPTLC3 forms the catalytic core. The composition of the serine palmitoyltransferase (SPT) complex determines the substrate preference. The SPTLC1-SPTLC2-SPTSSA complex shows a strong preference for C16-CoA substrate, while the SPTLC1-SPTLC3-SPTSSA isozyme uses both C14-CoA and C16-CoA as substrates, with a slight preference for C14-CoA. The SPTLC1-SPTLC2-SPTSSB complex shows a strong preference for C18-CoA substrate, while the SPTLC1-SPTLC3-SPTSSB isozyme displays an ability to use a broader range of acyl-CoAs, without apparent preference. The chain is Serine palmitoyltransferase 3 from Mus musculus (Mouse).